The primary structure comprises 138 residues: ATP synthase epsilon chain, chloroplastic (138 aa).

This sequence belongs to the ATPase epsilon chain family. As to quaternary structure, F-type ATPases have 2 components, CF(1) - the catalytic core - and CF(0) - the membrane proton channel. CF(1) has five subunits: alpha(3), beta(3), gamma(1), delta(1), epsilon(1). CF(0) has three main subunits: a, b and c.

The protein resides in the plastid. It localises to the chloroplast thylakoid membrane. In terms of biological role, produces ATP from ADP in the presence of a proton gradient across the membrane. The protein is ATP synthase epsilon chain, chloroplastic of Anthoceros angustus (Hornwort).